Here is a 190-residue protein sequence, read N- to C-terminus: Guanylate kinase (190 aa).

Positions 8-186 (ARPTVLTGPS…ALAELEKQMN (179 aa)) constitute a Guanylate kinase-like domain. ATP is bound at residue 15–22 (GPSGVGKG).

This sequence belongs to the guanylate kinase family.

It localises to the cytoplasm. It carries out the reaction GMP + ATP = GDP + ADP. It catalyses the reaction dZMP + ATP = dZDP + ADP. It participates in purine metabolism. In terms of biological role, essential for recycling GMP and indirectly, cGMP. Its function is as follows. (Microbial infection) Catalyzes the phosphorylation of dZMP to dZDP, when the bacterium is infected by a phage that produces the substrate for the synthesis of dZTP (2- amino-2'-deoxyadenosine 5'-triphosphate), which is then used by the phage as a DNA polymerase substrate. This is Guanylate kinase from Synechococcus sp. (strain CC9311).